The primary structure comprises 78 residues: Large ribosomal subunit protein eL38 (78 aa).

Belongs to the eukaryotic ribosomal protein eL38 family. Component of the large ribosomal subunit (LSU). Mature yeast ribosomes consist of a small (40S) and a large (60S) subunit. The 40S small subunit contains 1 molecule of ribosomal RNA (18S rRNA) and 33 different proteins (encoded by 57 genes). The large 60S subunit contains 3 rRNA molecules (25S, 5.8S and 5S rRNA) and 46 different proteins (encoded by 81 genes).

Its subcellular location is the cytoplasm. Component of the ribosome, a large ribonucleoprotein complex responsible for the synthesis of proteins in the cell. The small ribosomal subunit (SSU) binds messenger RNAs (mRNAs) and translates the encoded message by selecting cognate aminoacyl-transfer RNA (tRNA) molecules. The large subunit (LSU) contains the ribosomal catalytic site termed the peptidyl transferase center (PTC), which catalyzes the formation of peptide bonds, thereby polymerizing the amino acids delivered by tRNAs into a polypeptide chain. The nascent polypeptides leave the ribosome through a tunnel in the LSU and interact with protein factors that function in enzymatic processing, targeting, and the membrane insertion of nascent chains at the exit of the ribosomal tunnel. The sequence is that of Large ribosomal subunit protein eL38 from Saccharomyces cerevisiae (strain ATCC 204508 / S288c) (Baker's yeast).